Consider the following 132-residue polypeptide: Small ribosomal subunit protein uS8 (132 aa).

The protein belongs to the universal ribosomal protein uS8 family. In terms of assembly, part of the 30S ribosomal subunit. Contacts proteins S5 and S12.

Functionally, one of the primary rRNA binding proteins, it binds directly to 16S rRNA central domain where it helps coordinate assembly of the platform of the 30S subunit. The protein is Small ribosomal subunit protein uS8 of Anaeromyxobacter dehalogenans (strain 2CP-C).